The primary structure comprises 463 residues: Elongation factor 1-alpha 2 (463 aa).

Residue G2 is modified to N,N,N-trimethylglycine. In terms of domain architecture, tr-type G spans 5–242 (KTHINIVVIG…DTILPPTRPT (238 aa)). Residues 14–21 (GHVDSGKS) form a G1 region. D17, S18, G19, K20, S21, and T22 together coordinate GTP. Residue D17 participates in Mg(2+) binding. An N6,N6,N6-trimethyllysine; alternate modification is found at K36. At K36 the chain carries N6,N6-dimethyllysine; alternate. Position 36 is an N6-methyllysine; alternate (K36). K55 carries the N6,N6,N6-trimethyllysine modification. K55 bears the N6,N6-dimethyllysine mark. Residues 70–74 (GITID) are G2. K79 carries the N6,N6,N6-trimethyllysine modification. The interval 91 to 94 (DAPG) is G3. Positions 153, 154, and 156 each coordinate GTP. The tract at residues 153–156 (NKMD) is G4. Phosphoserine is present on S163. An N6,N6-dimethyllysine; alternate modification is found at K165. At K165 the chain carries N6-methyllysine; alternate. The residue at position 165 (K165) is an N6,N6,N6-trimethyllysine; alternate; by EEF1AKMT3. K179 carries the N6-acetyllysine modification. Residues S194, G195, and W196 each coordinate GTP. The tract at residues 194–196 (SGW) is G5. S224 carries the post-translational modification Phosphoserine. A Phosphothreonine modification is found at T239. 2 positions are modified to 5-glutamyl glycerylphosphorylethanolamine: E301 and E374. K439 bears the N6-acetyllysine mark. Positions 444 to 463 (KSGGAGKVTKSAQKAQKAGK) are disordered.

Belongs to the TRAFAC class translation factor GTPase superfamily. Classic translation factor GTPase family. EF-Tu/EF-1A subfamily. Homodimer; arranged in a 'head to tail' dimer configuration. Post-translationally, trimethylated at Lys-165 by EEF1AKMT3. Mono-, di-, and trimethylated at Lys-36 by EEF1AKMT4; trimethylated form is predominant. Methylation by EEF1AKMT4 contributes to the fine-tuning of translation rates for a subset of tRNAs. Trimethylated at the N-terminus and dimethylated at Lys-55 by METTL13.

Its subcellular location is the endoplasmic reticulum membrane. The catalysed reaction is GTP + H2O = GDP + phosphate + H(+). Its function is as follows. Translation elongation factor that catalyzes the GTP-dependent binding of aminoacyl-tRNA (aa-tRNA) to the A-site of ribosomes during the elongation phase of protein synthesis. Base pairing between the mRNA codon and the aa-tRNA anticodon promotes GTP hydrolysis, releasing the aa-tRNA from EEF1A1 and allowing its accommodation into the ribosome. The growing protein chain is subsequently transferred from the P-site peptidyl tRNA to the A-site aa-tRNA, extending it by one amino acid through ribosome-catalyzed peptide bond formation. The polypeptide is Elongation factor 1-alpha 2 (Eef1a2) (Rattus norvegicus (Rat)).